The following is a 207-amino-acid chain: NAD(P)H dehydrogenase (quinone) (207 aa).

Positions 3-194 (VQIIFYSMYG…EMAKFQGRHV (192 aa)) constitute a Flavodoxin-like domain. FMN is bound by residues 9–14 (SMYGHI) and 82–84 (TRF). Residue tyrosine 11 participates in NAD(+) binding. Residue tryptophan 102 participates in substrate binding. FMN is bound by residues 117–123 (STATQHG) and histidine 138.

The protein belongs to the WrbA family. The cofactor is FMN.

It catalyses the reaction a quinone + NADH + H(+) = a quinol + NAD(+). The enzyme catalyses a quinone + NADPH + H(+) = a quinol + NADP(+). The polypeptide is NAD(P)H dehydrogenase (quinone) (Aromatoleum aromaticum (strain DSM 19018 / LMG 30748 / EbN1) (Azoarcus sp. (strain EbN1))).